We begin with the raw amino-acid sequence, 141 residues long: Globin, extracellular monomeric (141 aa).

Residues 1-141 (ECDALQRFKV…LGVITGAIHD (141 aa)) form the Globin domain. Cys2 and Cys131 are disulfide-bonded. Residue His94 participates in heme b binding.

Belongs to the globin family. In terms of assembly, the giant hemoglobins of worms are formed of a monomeric subunit and a disulfide-bonded trimer. This subunit is monomeric.

It is found in the secreted. The protein is Globin, extracellular monomeric of Tubifex tubifex (Sludge worm).